Consider the following 439-residue polypeptide: Glutamate--tRNA ligase 2 (439 aa).

The 'HIGH' region signature appears at Pro-6–Asn-16. Residues Lys-232–Arg-236 carry the 'KMSKS' region motif. Residue Lys-235 participates in ATP binding.

It belongs to the class-I aminoacyl-tRNA synthetase family. Glutamate--tRNA ligase type 1 subfamily. In terms of assembly, monomer.

Its subcellular location is the cytoplasm. The enzyme catalyses tRNA(Glu) + L-glutamate + ATP = L-glutamyl-tRNA(Glu) + AMP + diphosphate. In terms of biological role, catalyzes the attachment of glutamate to tRNA(Glu) in a two-step reaction: glutamate is first activated by ATP to form Glu-AMP and then transferred to the acceptor end of tRNA(Glu). The protein is Glutamate--tRNA ligase 2 of Helicobacter pylori (strain HPAG1).